Reading from the N-terminus, the 205-residue chain is MDAVTPDAARIAAAINTKPSREEAEAAVRTLISWAGDDPTREGLLDTPKRVVKAYEEWFSGYDADPLKALGKTFEDVQGYDDMVMLTNIDVESHCEHHLAPIMGVAHVAYLPSKAVVGISKIARVVEIFSKRMQTQETMTAQIADALTEAMEPRGVAVLVDAKHQCMTTRGVHHPNVSTITTTFTGEFRNDRDLKDRFMRLLERA.

Residues C95, H98, and C166 each coordinate Zn(2+).

This sequence belongs to the GTP cyclohydrolase I family. Toroid-shaped homodecamer, composed of two pentamers of five dimers.

It carries out the reaction GTP + H2O = 7,8-dihydroneopterin 3'-triphosphate + formate + H(+). Its pathway is cofactor biosynthesis; 7,8-dihydroneopterin triphosphate biosynthesis; 7,8-dihydroneopterin triphosphate from GTP: step 1/1. The protein is GTP cyclohydrolase 1 of Maricaulis maris (strain MCS10) (Caulobacter maris).